We begin with the raw amino-acid sequence, 76 residues long: DNA-directed RNA polymerase subunit epsilon (76 aa).

Belongs to the RNA polymerase subunit epsilon family. In terms of assembly, RNAP is composed of a core of 2 alpha, a beta and a beta' subunit. The core is associated with a delta subunit, and at least one of epsilon or omega. When a sigma factor is associated with the core the holoenzyme is formed, which can initiate transcription.

It catalyses the reaction RNA(n) + a ribonucleoside 5'-triphosphate = RNA(n+1) + diphosphate. A non-essential component of RNA polymerase (RNAP). The chain is DNA-directed RNA polymerase subunit epsilon from Streptococcus thermophilus (strain CNRZ 1066).